Consider the following 127-residue polypeptide: Protein ApaG (127 aa).

The region spanning 3-127 is the ApaG domain; that stretch reads KSETYRIEVE…FMLAMPRVLH (125 aa).

This is Protein ApaG from Azoarcus sp. (strain BH72).